A 68-amino-acid polypeptide reads, in one-letter code: Copper transport protein ATOX1 (68 aa).

Residues 1 to 63 (MPKHEFSVDM…TLEKTGKAVS (63 aa)) form the HMA domain. Residues cysteine 12 and cysteine 15 each contribute to the Cu cation site. Position 47 is a phosphoserine (serine 47). Lysine 60 bears the N6-acetyllysine mark.

Belongs to the ATX1 family. In terms of assembly, homodimer. Interacts with ATP7B. Interacts with ATP7A. Interacts (via dimer form) with SLC31A1 (via C-terminal domain); this interaction improves ATOX1 stability and controls intracellular Cu(I) levels.

Its function is as follows. Binds and deliver cytosolic copper to the copper ATPase proteins. May be important in cellular antioxidant defense. This chain is Copper transport protein ATOX1, found in Canis lupus familiaris (Dog).